The primary structure comprises 298 residues: Acetyl-coenzyme A carboxylase carboxyl transferase subunit beta (298 aa).

A disordered region spans residues 1 to 21; it reads MNQEVKSGKVLSPSTPWTQRP. A C4-type zinc finger spans residues 20–67; the sequence is RPVPGIEVADEQQTLKATFTEPTIECPECHALVTRTAISFNAYVCPQC. Residues 41–298 form the CoA carboxyltransferase N-terminal domain; sequence PTIECPECHA…RLVSKLMNLP (258 aa). Zn(2+) is bound by residues C45, C48, C64, and C67.

Belongs to the AccD/PCCB family. Acetyl-CoA carboxylase is a heterohexamer composed of biotin carboxyl carrier protein (AccB), biotin carboxylase (AccC) and two subunits each of ACCase subunit alpha (AccA) and ACCase subunit beta (AccD). The cofactor is Zn(2+).

The protein localises to the cytoplasm. It carries out the reaction N(6)-carboxybiotinyl-L-lysyl-[protein] + acetyl-CoA = N(6)-biotinyl-L-lysyl-[protein] + malonyl-CoA. It participates in lipid metabolism; malonyl-CoA biosynthesis; malonyl-CoA from acetyl-CoA: step 1/1. In terms of biological role, component of the acetyl coenzyme A carboxylase (ACC) complex. Biotin carboxylase (BC) catalyzes the carboxylation of biotin on its carrier protein (BCCP) and then the CO(2) group is transferred by the transcarboxylase to acetyl-CoA to form malonyl-CoA. The polypeptide is Acetyl-coenzyme A carboxylase carboxyl transferase subunit beta (Acinetobacter baumannii (strain SDF)).